We begin with the raw amino-acid sequence, 149 residues long: Large ribosomal subunit protein uL15A (149 aa).

The tract at residues 21-40 (RIGKHRKQRGGRGNAGGQHH) is disordered.

This sequence belongs to the universal ribosomal protein uL15 family. Component of the large ribosomal subunit.

It localises to the cytoplasm. The protein localises to the cytosol. Its subcellular location is the endoplasmic reticulum. Component of the large ribosomal subunit. The ribosome is a large ribonucleoprotein complex responsible for the synthesis of proteins in the cell. The polypeptide is Large ribosomal subunit protein uL15A (rpl27a-1) (Entamoeba histolytica (strain ATCC 30459 / HM-1:IMSS / ABRM)).